The sequence spans 397 residues: GDNF family receptor alpha-3 (397 aa).

A signal peptide spans 1–28 (MGLSWSPRPPLLMILLLVLSLWLPLGAG). Cys-48 and Cys-54 are joined by a disulfide. N-linked (GlcNAc...) asparagine glycans are attached at residues Asn-92 and Asn-145. Intrachain disulfides connect Cys-159–Cys-215, Cys-166–Cys-172, Cys-183–Cys-193, Cys-188–Cys-236, Cys-217–Cys-224, Cys-245–Cys-313, Cys-252–Cys-258, Cys-269–Cys-285, Cys-278–Cys-337, and Cys-315–Cys-325. N-linked (GlcNAc...) asparagine glycosylation is present at Asn-306. Asn-371 carries the GPI-anchor amidated asparagine lipid modification. The propeptide at 372–397 (PALRLQPRLPILSFSILPLILLQTLW) is removed in mature form.

It belongs to the GDNFR family. Interacts with ARTN ligand and RET: forms a 2:2:2 ternary complex composed of ARTN ligand, GFRA3 and RET receptor. Interacts with SORL1.

The protein localises to the cell membrane. In terms of biological role, receptor for artemin (ARTN), a growth factor that supports the survival of sensory and sympathetic peripheral neurons. ARTN-binding leads to autophosphorylation and activation of the RET receptor. The protein is GDNF family receptor alpha-3 (Gfra3) of Mus musculus (Mouse).